Consider the following 156-residue polypeptide: Ribosomal RNA large subunit methyltransferase H (156 aa).

Residues Leu73, Gly104, and 123 to 128 (LSALTL) each bind S-adenosyl-L-methionine.

Belongs to the RNA methyltransferase RlmH family. Homodimer.

Its subcellular location is the cytoplasm. The catalysed reaction is pseudouridine(1915) in 23S rRNA + S-adenosyl-L-methionine = N(3)-methylpseudouridine(1915) in 23S rRNA + S-adenosyl-L-homocysteine + H(+). Specifically methylates the pseudouridine at position 1915 (m3Psi1915) in 23S rRNA. The sequence is that of Ribosomal RNA large subunit methyltransferase H from Shewanella baltica (strain OS223).